Consider the following 381-residue polypeptide: 3-dehydroquinate synthase (381 aa).

NAD(+)-binding positions include 81–86 (EGEVSK), 115–119 (GVVGD), 139–140 (TS), Lys152, and Lys161. Zn(2+) is bound by residues Glu194, His256, and His274.

It belongs to the sugar phosphate cyclases superfamily. Dehydroquinate synthase family. Requires Co(2+) as cofactor. The cofactor is Zn(2+). NAD(+) serves as cofactor.

The protein resides in the cytoplasm. It carries out the reaction 7-phospho-2-dehydro-3-deoxy-D-arabino-heptonate = 3-dehydroquinate + phosphate. The protein operates within metabolic intermediate biosynthesis; chorismate biosynthesis; chorismate from D-erythrose 4-phosphate and phosphoenolpyruvate: step 2/7. Its function is as follows. Catalyzes the conversion of 3-deoxy-D-arabino-heptulosonate 7-phosphate (DAHP) to dehydroquinate (DHQ). This chain is 3-dehydroquinate synthase, found in Rhodopseudomonas palustris (strain BisA53).